Here is a 329-residue protein sequence, read N- to C-terminus: Malate dehydrogenase (329 aa).

Position 13 to 19 (13 to 19 (GAAGNIS)) interacts with NAD(+). Substrate contacts are provided by Arg-94 and Arg-100. Residues Asn-107, Gln-114, and 131–133 (VGN) contribute to the NAD(+) site. Residues Asn-133 and Arg-164 each contribute to the substrate site. His-189 acts as the Proton acceptor in catalysis.

The protein belongs to the LDH/MDH superfamily. MDH type 2 family.

It catalyses the reaction (S)-malate + NAD(+) = oxaloacetate + NADH + H(+). Catalyzes the reversible oxidation of malate to oxaloacetate. The sequence is that of Malate dehydrogenase from Psychrobacter arcticus (strain DSM 17307 / VKM B-2377 / 273-4).